An 851-amino-acid polypeptide reads, in one-letter code: MTVASDDSPKEARGIPFLDQKSRKLANELLEPCLPFIQFNLGEIEQRAKHYLNTVPTSKDGNTKAHYLLAGSGINAEQTWKKIESLSLQVRPPTTLELSFTDVDMFLKYHREKNVLNSLEALVQNTQIAFDQYLEEEWRSKAAKSRPSFDNILLENKKRVSFYPFSVQRSQKFASTLKMCLEEEALHGFQSKLVSSFCEVAREFAHDTKSLLLYESWKLLSSVILDKDSVTVFGNKGIISKAFDIETEDGSVNSRFYQRISDCSRKFLEAQFFEVLNKEIAKTPQAALVGGVPSIRNKIRAYLNIRLLRNGVWINPDLEIIQDVPIWAFIFYLLRCGFLKEAVDFTEENRDLFEKVAEKFPFYINAYAKAPNGILPRQLRSQLFSEFNQTIRLQESSDPYKYAVYKIIGRCDLSKTSCPSICSVTEDYIWFQLILSREFTEKSVSAHEFFSLEDVQHILLSYGSDYFTNNGSNPVMYFFLLMLCGLYERAINFLYPYFPTDAVHFAITCAYYGLLRTAPSSSVVSNEPGKIQSMLVETKSGKPSLEFDRLLIDYTQTCQELSPVMSACYLIPMCKIDKYISMCHKSLCSLVLSTRDYVNLLGDIRGDGERTPSFLENHRSLIGLSSVKEYLSKITLTAAKQADDQGLLSDAILLYHLAEDYDAAVTVINRRLGSALLRFLDQFVFPDKLISLTKSMMDVYNRNPSLYAKVDYKNRETTNLLLLTVEAFNAYTNKDYEQALSSLQQLEILPLDPLDSDCETFVVRKLAKEFRFLNENLLQNVPGIVLIAMNSLKELYAKQKSSSFGNDAISVDKLRLYRQKARRIVMYSFLIEYRMPSQILEQLNRCEIEMT.

This sequence belongs to the nucleoporin interacting component (NIC) family.

The protein localises to the nucleus envelope. Its function is as follows. Has a role in meiosis. The sequence is that of Meiotically up-regulated gene 87 protein (mug87) from Schizosaccharomyces pombe (strain 972 / ATCC 24843) (Fission yeast).